Consider the following 231-residue polypeptide: Large ribosomal subunit protein uL1 (231 aa).

It belongs to the universal ribosomal protein uL1 family. Part of the 50S ribosomal subunit.

Its function is as follows. Binds directly to 23S rRNA. The L1 stalk is quite mobile in the ribosome, and is involved in E site tRNA release. Functionally, protein L1 is also a translational repressor protein, it controls the translation of the L11 operon by binding to its mRNA. The chain is Large ribosomal subunit protein uL1 from Alkalilimnicola ehrlichii (strain ATCC BAA-1101 / DSM 17681 / MLHE-1).